Here is a 246-residue protein sequence, read N- to C-terminus: Glucosamine-6-phosphate deaminase (246 aa).

D67 functions as the Proton acceptor; for enolization step in the catalytic mechanism. Residue N136 is the For ring-opening step of the active site. The active-site Proton acceptor; for ring-opening step is the H138. Residue E143 is the For ring-opening step of the active site.

Belongs to the glucosamine/galactosamine-6-phosphate isomerase family. NagB subfamily.

It carries out the reaction alpha-D-glucosamine 6-phosphate + H2O = beta-D-fructose 6-phosphate + NH4(+). The protein operates within amino-sugar metabolism; N-acetylneuraminate degradation; D-fructose 6-phosphate from N-acetylneuraminate: step 5/5. Functionally, catalyzes the reversible isomerization-deamination of glucosamine 6-phosphate (GlcN6P) to form fructose 6-phosphate (Fru6P) and ammonium ion. The chain is Glucosamine-6-phosphate deaminase from Halalkalibacterium halodurans (strain ATCC BAA-125 / DSM 18197 / FERM 7344 / JCM 9153 / C-125) (Bacillus halodurans).